The sequence spans 468 residues: Arginine biosynthesis bifunctional protein ArgJ, mitochondrial (468 aa).

The N-terminal 23 residues, 1-23 (MVGFSRCALSQLRQPKAQLVRSF), are a transit peptide targeting the mitochondrion. Positions 198, 227, 238, 324, 463, and 468 each coordinate substrate. Threonine 238 serves as the catalytic Nucleophile.

This sequence belongs to the ArgJ family. In terms of assembly, heterodimer of an alpha and a beta chain. In terms of processing, the alpha and beta chains are autoproteolytically processed from a single precursor protein within the mitochondrion.

It is found in the mitochondrion matrix. It carries out the reaction N(2)-acetyl-L-ornithine + L-glutamate = N-acetyl-L-glutamate + L-ornithine. The catalysed reaction is L-glutamate + acetyl-CoA = N-acetyl-L-glutamate + CoA + H(+). It functions in the pathway amino-acid biosynthesis; L-arginine biosynthesis; L-ornithine and N-acetyl-L-glutamate from L-glutamate and N(2)-acetyl-L-ornithine (cyclic): step 1/1. Its pathway is amino-acid biosynthesis; L-arginine biosynthesis; N(2)-acetyl-L-ornithine from L-glutamate: step 1/4. Its function is as follows. Catalyzes two activities which are involved in the cyclic version of arginine biosynthesis: the synthesis of acetylglutamate from glutamate and acetyl-CoA, and of ornithine by transacetylation between acetylornithine and glutamate. This Podospora anserina (strain S / ATCC MYA-4624 / DSM 980 / FGSC 10383) (Pleurage anserina) protein is Arginine biosynthesis bifunctional protein ArgJ, mitochondrial.